The chain runs to 208 residues: Uracil phosphoribosyltransferase (208 aa).

5-phospho-alpha-D-ribose 1-diphosphate-binding positions include Arg78, Arg103, and Asp130–Ser138. Residues Ile193 and Gly198–Ala200 each bind uracil. Asp199 contacts 5-phospho-alpha-D-ribose 1-diphosphate.

The protein belongs to the UPRTase family. It depends on Mg(2+) as a cofactor.

It catalyses the reaction UMP + diphosphate = 5-phospho-alpha-D-ribose 1-diphosphate + uracil. Its pathway is pyrimidine metabolism; UMP biosynthesis via salvage pathway; UMP from uracil: step 1/1. With respect to regulation, allosterically activated by GTP. Catalyzes the conversion of uracil and 5-phospho-alpha-D-ribose 1-diphosphate (PRPP) to UMP and diphosphate. In Pelobacter propionicus (strain DSM 2379 / NBRC 103807 / OttBd1), this protein is Uracil phosphoribosyltransferase.